Here is a 152-residue protein sequence, read N- to C-terminus: UPF0311 protein blr7842 (152 aa).

The protein belongs to the UPF0311 family.

This chain is UPF0311 protein blr7842, found in Bradyrhizobium diazoefficiens (strain JCM 10833 / BCRC 13528 / IAM 13628 / NBRC 14792 / USDA 110).